The chain runs to 473 residues: MSDGTGVRGRTMAEKIWEEHVVRRADGEPDLLYIDLHLIHEVTSPQAFDGLRLAGRRVRRPDLTIATEDHNVPTTDIDKPIADPVSRTQVETLRRNCAEFGIRLHPMGDREQGIVHVIGPQLGLTQPGMTIVCGDSHTSTHGAFGALAFGIGTSEVEHVLATQTLPQYKPKTMAVTVDGTLRPGVTSKDIILALIAKIGTGGGQGHVIEYRGEAIRALSMEARMTICNMSIEAGARAGMIAPDDTTFAYLEGRPHAPKGRDWEAALEYWRSLPTDPDAVFDEEVLLDAGSLSPYVTWGTNPGQGAPLDSVVPDPATFSDPIERAAAERALAYMDLQPGTPLREIRVDTVFIGSCTNGRIEDLRAAASVLQGRKVAPGVRVLVVPGSMAVKAQAEAEGLDRIFRDAGAEWRNAGCSMCLGMNPDQLAPGQRSASTSNRNFEGRQGRGGRTHLVSPLVAAATAVAGHLAAPSDLD.

Positions 354, 414, and 417 each coordinate [4Fe-4S] cluster. The disordered stretch occupies residues 425 to 448 (LAPGQRSASTSNRNFEGRQGRGGR).

The protein belongs to the aconitase/IPM isomerase family. LeuC type 1 subfamily. In terms of assembly, heterodimer of LeuC and LeuD. [4Fe-4S] cluster serves as cofactor.

The enzyme catalyses (2R,3S)-3-isopropylmalate = (2S)-2-isopropylmalate. It functions in the pathway amino-acid biosynthesis; L-leucine biosynthesis; L-leucine from 3-methyl-2-oxobutanoate: step 2/4. Catalyzes the isomerization between 2-isopropylmalate and 3-isopropylmalate, via the formation of 2-isopropylmaleate. In Acidothermus cellulolyticus (strain ATCC 43068 / DSM 8971 / 11B), this protein is 3-isopropylmalate dehydratase large subunit.